The sequence spans 178 residues: Cytochrome b6-f complex iron-sulfur subunit (178 aa).

A helical transmembrane segment spans residues L20–M42. The 97-residue stretch at K65 to V161 folds into the Rieske domain. The [2Fe-2S] cluster site is built by C107, H109, C125, and H128. A disulfide bond links C112 and C127.

This sequence belongs to the Rieske iron-sulfur protein family. As to quaternary structure, the 4 large subunits of the cytochrome b6-f complex are cytochrome b6, subunit IV (17 kDa polypeptide, PetD), cytochrome f and the Rieske protein, while the 4 small subunits are PetG, PetL, PetM and PetN. The complex functions as a dimer. [2Fe-2S] cluster is required as a cofactor.

Its subcellular location is the cellular thylakoid membrane. The enzyme catalyses 2 oxidized [plastocyanin] + a plastoquinol + 2 H(+)(in) = 2 reduced [plastocyanin] + a plastoquinone + 4 H(+)(out). Its function is as follows. Component of the cytochrome b6-f complex, which mediates electron transfer between photosystem II (PSII) and photosystem I (PSI), cyclic electron flow around PSI, and state transitions. The sequence is that of Cytochrome b6-f complex iron-sulfur subunit from Prochlorococcus marinus (strain MIT 9312).